Here is a 953-residue protein sequence, read N- to C-terminus: Scaffold attachment factor B2 (953 aa).

The segment at 1 to 29 is disordered; the sequence is MAETLPGSGDSGPGTASLGPGVAETGTRR. The residue at position 2 (Ala2) is an N-acetylalanine. In terms of domain architecture, SAP spans 30 to 64; it reads LSELRVIDLRAELKKRNLDTGGNKSVLMERLKKAV. Ser54 bears the Phosphoserine mark. Lys65 participates in a covalent cross-link: Glycyl lysine isopeptide (Lys-Gly) (interchain with G-Cter in SUMO1); alternate. Lys65 participates in a covalent cross-link: Glycyl lysine isopeptide (Lys-Gly) (interchain with G-Cter in SUMO2); alternate. The segment at 91-114 is disordered; it reads KGLKMEEEGTEDNGLEDDSRDGQE. A Glycyl lysine isopeptide (Lys-Gly) (interchain with G-Cter in SUMO2) cross-link involves residue Lys94. Residues 98-114 show a composition bias toward acidic residues; it reads EGTEDNGLEDDSRDGQE. Ser109 and Ser158 each carry phosphoserine. Residues Lys188 and Lys199 each participate in a glycyl lysine isopeptide (Lys-Gly) (interchain with G-Cter in SUMO2) cross-link. Phosphothreonine is present on Thr201. Residue Ser207 is modified to Phosphoserine. Residues 219 to 404 are disordered; that stretch reads ILGETCKSEP…KDEKGRVGSG (186 aa). The segment covering 224–233 has biased composition (basic and acidic residues); sequence CKSEPVKEES. Lys230 is covalently cross-linked (Glycyl lysine isopeptide (Lys-Gly) (interchain with G-Cter in SUMO)). Polar residues predominate over residues 274-285; the sequence is SESTAHAQSSKA. A compositionally biased stretch (basic and acidic residues) spans 292–308; sequence VKREPAEQPGDGERTDC. Lys293 is covalently cross-linked (Glycyl lysine isopeptide (Lys-Gly) (interchain with G-Cter in SUMO)). Residues 318 to 329 show a composition bias toward low complexity; sequence EQSSAASELAEA. Basic and acidic residues predominate over residues 345-358; that stretch reads EARDSKEDGRKFDF. The span at 370 to 382 shows a compositional bias: polar residues; the sequence is ESSTSEGADQKMS. Residues Lys380, Lys385, Lys388, Lys391, and Lys395 each participate in a glycyl lysine isopeptide (Lys-Gly) (interchain with G-Cter in SUMO2) cross-link. The segment covering 383 to 400 has biased composition (basic and acidic residues); it reads SFKEEKDIKPIIKDEKGR. Positions 407–485 constitute an RRM domain; the sequence is RNLWVSGLSS…RMISVEKAKN (79 aa). Residues Ser507 and Ser513 each carry the phosphoserine modification. Glycyl lysine isopeptide (Lys-Gly) (interchain with G-Cter in SUMO2) cross-links involve residues Lys517, Lys524, Lys525, Lys541, Lys542, and Lys551. Residues 525–551 show a composition bias toward basic and acidic residues; the sequence is KEEKIEKKEEKKPEDIKKEEKDQDELK. 2 disordered regions span residues 525 to 665 and 684 to 953; these read KEEK…RLQR and RERL…TRRY. The segment covering 555-564 has biased composition (polar residues); it reads TNRSRVTKSG. Positions 567 to 579 are enriched in basic and acidic residues; sequence GMERTVVMDKSKG. Residues Lys578, Lys586, and Lys608 each participate in a glycyl lysine isopeptide (Lys-Gly) (interchain with G-Cter in SUMO2) cross-link. 2 stretches are compositionally biased toward basic and acidic residues: residues 590–665 and 684–820; these read RSKE…RLQR and RERL…DSRD. The segment at 600–953 is interaction with SAFB1; it reads DRKSESKEKR…PPYPHFTRRY (354 aa). A Glycyl lysine isopeptide (Lys-Gly) (interchain with G-Cter in SUMO2); alternate cross-link involves residue Lys616. Lys616 bears the N6-acetyllysine; alternate mark. The Nuclear localization signal signature appears at 713–730; it reads RRQQEQLRYEQERRPGRR. Ser787 and Ser832 each carry phosphoserine. Positions 843–859 are enriched in basic and acidic residues; the sequence is GGRDWGEHNQRLEEHQA. The span at 881-890 shows a compositional bias: gly residues; it reads GERGLSGPSG. Residue Ser886 is modified to Phosphoserine. Omega-N-methylarginine occurs at positions 897 and 903. The span at 899-927 shows a compositional bias: gly residues; the sequence is GVAGRGGFAQGGHSQGHVVPGGGLEGGGV.

In terms of assembly, interacts with SAFB/SAFB1 and SCAM1. Interacts with isoform 2 SRPK1 and inhibits its activity. As to expression, expressed at high levels in the CNS and at low levels in the liver. Expressed in a wide number of breast cancer cell lines.

The protein localises to the cytoplasm. It is found in the nucleus. In terms of biological role, binds to scaffold/matrix attachment region (S/MAR) DNA. Can function as an estrogen receptor corepressor and can also inhibit cell proliferation. This chain is Scaffold attachment factor B2 (SAFB2), found in Homo sapiens (Human).